The primary structure comprises 681 residues: Phenylalanine--tRNA ligase beta subunit (681 aa).

The B5 domain occupies 288–363 (PARETVLLRP…RIHGYDQIPE (76 aa)). The Mg(2+) site is built by D341, D347, E350, and E351. Positions 586–681 (SSFPSIQRDL…EKQLEAVLLR (96 aa)) constitute an FDX-ACB domain.

It belongs to the phenylalanyl-tRNA synthetase beta subunit family. Type 1 subfamily. In terms of assembly, tetramer of two alpha and two beta subunits. Mg(2+) serves as cofactor.

The protein localises to the cytoplasm. The enzyme catalyses tRNA(Phe) + L-phenylalanine + ATP = L-phenylalanyl-tRNA(Phe) + AMP + diphosphate + H(+). The protein is Phenylalanine--tRNA ligase beta subunit of Rhodopirellula baltica (strain DSM 10527 / NCIMB 13988 / SH1).